We begin with the raw amino-acid sequence, 229 residues long: Lactate utilization protein C (229 aa).

It belongs to the LutC/YkgG family.

Functionally, is involved in L-lactate degradation and allows cells to grow with lactate as the sole carbon source. The sequence is that of Lactate utilization protein C from Shouchella clausii (strain KSM-K16) (Alkalihalobacillus clausii).